Here is a 265-residue protein sequence, read N- to C-terminus: Ubiquinone biosynthesis protein COQ4 homolog, mitochondrial (265 aa).

Residues His162, Asp163, His166, and Glu178 each coordinate Zn(2+).

The protein belongs to the COQ4 family. In terms of assembly, component of a multi-subunit COQ enzyme complex. It depends on Zn(2+) as a cofactor.

It localises to the mitochondrion inner membrane. It carries out the reaction a 4-hydroxy-3-methoxy-5-(all-trans-polyprenyl)benzoate + H(+) = a 2-methoxy-6-(all-trans-polyprenyl)phenol + CO2. Its pathway is cofactor biosynthesis; ubiquinone biosynthesis. Lyase that catalyzes the C1-decarboxylation of 4-hydroxy-3-methoxy-5-(all-trans-polyprenyl)benzoic acid into 2-methoxy-6-(all-trans-polyprenyl)phenol during ubiquinone biosynthesis. This chain is Ubiquinone biosynthesis protein COQ4 homolog, mitochondrial, found in Drosophila willistoni (Fruit fly).